The following is a 204-amino-acid chain: LexA repressor (204 aa).

Positions 31-51 (VREICAKVGLSSTSTVHGHLS) form a DNA-binding region, H-T-H motif. Residues serine 128 and lysine 165 each act as for autocatalytic cleavage activity in the active site.

This sequence belongs to the peptidase S24 family. Homodimer.

It carries out the reaction Hydrolysis of Ala-|-Gly bond in repressor LexA.. Functionally, represses a number of genes involved in the response to DNA damage (SOS response), including recA and lexA. In the presence of single-stranded DNA, RecA interacts with LexA causing an autocatalytic cleavage which disrupts the DNA-binding part of LexA, leading to derepression of the SOS regulon and eventually DNA repair. The chain is LexA repressor from Clostridium acetobutylicum (strain ATCC 824 / DSM 792 / JCM 1419 / IAM 19013 / LMG 5710 / NBRC 13948 / NRRL B-527 / VKM B-1787 / 2291 / W).